Reading from the N-terminus, the 662-residue chain is Methionine--tRNA ligase (662 aa).

Positions 13–23 match the 'HIGH' region motif; the sequence is PYTNGPCHLGH. Zn(2+) is bound by residues cysteine 144, cysteine 147, cysteine 156, and cysteine 160. Positions 326–330 match the 'KMSKS' region motif; the sequence is KFSKS. Lysine 329 lines the ATP pocket. The tRNA-binding domain occupies 564–662; that stretch reads DFSKVEIKTG…KPVEPGTKIR (99 aa).

The protein belongs to the class-I aminoacyl-tRNA synthetase family. MetG type 1 subfamily. In terms of assembly, homodimer. Zn(2+) is required as a cofactor.

Its subcellular location is the cytoplasm. The enzyme catalyses tRNA(Met) + L-methionine + ATP = L-methionyl-tRNA(Met) + AMP + diphosphate. Its function is as follows. Is required not only for elongation of protein synthesis but also for the initiation of all mRNA translation through initiator tRNA(fMet) aminoacylation. In Methanoregula boonei (strain DSM 21154 / JCM 14090 / 6A8), this protein is Methionine--tRNA ligase.